Reading from the N-terminus, the 525-residue chain is MALDIHAHRILILDFGSQYTQLIARRVREIGVYCELHPFDMDDEAIREFAPKGVILAGGPESVHEANSPRCPQAVFDLGVPVFGICYGMQTMAEQLGGKVEGSELREFGYARVDVVGKSRLLDGIEDHIDADGLFGLDVWMSHGDKVTKMPEDFHILASTPSCPIAGMFSDERRYYGVQFHPEVTHTKQGGRILSRFILDICECEALWTPSKIAEDAIAQVRAQVGTDNVLLGLSGGVDSSVVAALLHKAIGDQLTCVFVDNGLLRLHEGEQVMAMFAENMGVKVIRANAEDQFLNNLAGESDPEKKRKIIGRTFIDVFDAQSNKLDNIKYLAQGTIYPDVIESAGAKSGKAHVIKSHHNVGGLPEEMNLKLVEPLRELFKDEVRRLGLELGLPYDMVYRHPFPGPGLGVRILGEVKKEYADLLRRADHIFIEELRKADWYHKVSQAFVVFQPVKSVGVVGDGRRYAWVVALRAVETIDFMTARWAHLPYELLETVSGRIINEIEGISRVTYDVSSKPPATIEWE.

A Glutamine amidotransferase type-1 domain is found at 9-207 (RILILDFGSQ…ILDICECEAL (199 aa)). The active-site Nucleophile is the Cys86. Residues His181 and Glu183 contribute to the active site. Residues 208–400 (WTPSKIAEDA…LGLPYDMVYR (193 aa)) enclose the GMPS ATP-PPase domain. 235–241 (SGGVDSS) lines the ATP pocket.

As to quaternary structure, homodimer.

It carries out the reaction XMP + L-glutamine + ATP + H2O = GMP + L-glutamate + AMP + diphosphate + 2 H(+). Its pathway is purine metabolism; GMP biosynthesis; GMP from XMP (L-Gln route): step 1/1. Functionally, catalyzes the synthesis of GMP from XMP. The chain is GMP synthase [glutamine-hydrolyzing] from Pseudomonas fluorescens (strain SBW25).